Consider the following 704-residue polypeptide: Protein polyglycylase TTLL10 (704 aa).

Disordered stretches follow at residues 1–32, 46–125, and 137–170; these read MALHPQAGRPHRDGSEAQAEAAAQDLGRLPSP, GHRA…SVKE, and DADDLEEEEAARLPVTSPDGLLMEGDKQPSPGQG. Basic residues predominate over residues 93–105; the sequence is VSSKRSKRSRIHP. Positions 114 to 125 are enriched in basic and acidic residues; sequence THEKQMGSSVKE. Residues 169–540 enclose the TTL domain; sequence QGPFFYIGGT…TCQKSLHSQK (372 aa). ATP is bound by residues Lys301, 307–308, 350–353, 363–365, and 406–407; these read QG, QRYV, KFD, and TN. An a protein-binding site is contributed by Gln307. Mg(2+)-binding residues include Asp486, Glu499, and Asn501. Residues 565–704 are disordered; sequence LASSRPLNRL…EQRSTSHRGS (140 aa). 2 stretches are compositionally biased toward pro residues: residues 576 to 588 and 596 to 612; these read NPNPNPNPNANPH and HPHPNPHPNANPHPPRP. 2 stretches are compositionally biased toward low complexity: residues 616–629 and 654–667; these read AASSALSSARAAIS and SDSSGSSIAESEPS.

Mg(2+) is required as a cofactor. Highly expressed in testis. Expressed in brain, heart, kidney, liver, lung, muscle and trachea.

It localises to the cytoplasm. The protein resides in the cytoskeleton. The protein localises to the cell projection. Its subcellular location is the cilium. It is found in the cilium axoneme. The catalysed reaction is (glycyl)(n)-glycyl-L-glutamyl-[protein] + glycine + ATP = (glycyl)(n+1)-glycyl-L-glutamyl-[protein] + ADP + phosphate + H(+). Polyglycylase which modifies both tubulin and non-tubulin proteins, generating polyglycine side chains of variable lengths on the gamma-carboxyl groups of specific glutamate residues of target proteins. Involved in the elongation step rather than the initiation step of the polyglycylation reaction. Polyglycylates alpha-tubulin and beta-tubulin. Polyglycylates non-tubulin proteins such as nucleosome assembly protein NAP1. In Mus musculus (Mouse), this protein is Protein polyglycylase TTLL10.